The sequence spans 491 residues: Cytochrome P450 81F2 (491 aa).

Residues 283 to 303 traverse the membrane as a helical segment; it reads VIIKGLMLSMMLAGTDTAAVT. Cysteine 429 contacts heme.

This sequence belongs to the cytochrome P450 family. Heme serves as cofactor.

Its subcellular location is the membrane. The protein operates within secondary metabolite biosynthesis. Functionally, involved in indole glucosinolate biosynthesis. Catalyzes hydroxylation reactions of the glucosinolate indole ring. Converts indol-3-yl-methylglucosinolate (I3M) to 4-hydroxy-indol-3-yl-methylglucosinolate (4OH-I3M) and/or 1-hydroxy-indol-3-yl-methylglucosinolate (1OH-I3M) intermediates. These hydroxy intermediates are converted to 4-methoxy-indol-3-yl-methylglucosinolate (4MO-I3M) and 1-methoxy-indol-3-yl-methylglucosinolate (1MO-I3M) by indole glucosinolate methyltransferase 1 and 2 (IGMT1 and IGMT2). Contributes to defense against the green peach aphid (Myzus persicae), a generalist phloem-feeding herbivore. Required for the biosynthesis of antifungal indole glucosinolate metabolites. Required for the pathogen-induced accumulation of 4MO-I3M, which in turn is activated by the atypical BGLU26/PEN2 myrosinase. Required for the biosynthesis of Trp-derived antifungal compounds and non-host resistance to the necrotrophic fungal pathogen Plectosphaerella cucumerina. Required for resistance to the non-adapted fungal pathogen Colletotrichum gloeosporioides. The sequence is that of Cytochrome P450 81F2 from Arabidopsis thaliana (Mouse-ear cress).